The following is a 120-amino-acid chain: Aspartate 1-decarboxylase (120 aa).

Catalysis depends on S25, which acts as the Schiff-base intermediate with substrate; via pyruvic acid. Pyruvic acid (Ser) is present on S25. T57 lines the substrate pocket. Y58 acts as the Proton donor in catalysis. 72-74 is a substrate binding site; sequence GAA.

This sequence belongs to the PanD family. Heterooctamer of four alpha and four beta subunits. Requires pyruvate as cofactor. Is synthesized initially as an inactive proenzyme, which is activated by self-cleavage at a specific serine bond to produce a beta-subunit with a hydroxyl group at its C-terminus and an alpha-subunit with a pyruvoyl group at its N-terminus.

It localises to the cytoplasm. The enzyme catalyses L-aspartate + H(+) = beta-alanine + CO2. It participates in cofactor biosynthesis; (R)-pantothenate biosynthesis; beta-alanine from L-aspartate: step 1/1. Functionally, catalyzes the pyruvoyl-dependent decarboxylation of aspartate to produce beta-alanine. In Helicobacter hepaticus (strain ATCC 51449 / 3B1), this protein is Aspartate 1-decarboxylase.